The sequence spans 179 residues: Stress response regulator gls24 homolog (179 aa).

A disordered region spans residues 147-179; sequence TSEFTSHQVENVKASVDNGVEKLQDQKAEPRVK. Over residues 165–179 the composition is skewed to basic and acidic residues; that stretch reads GVEKLQDQKAEPRVK.

Belongs to the asp23 family.

The polypeptide is Stress response regulator gls24 homolog (Streptococcus pyogenes serotype M28 (strain MGAS6180)).